A 723-amino-acid polypeptide reads, in one-letter code: Bifunctional lysine-specific demethylase and histidyl-hydroxylase NO66 (723 aa).

2 disordered regions span residues 13–34 (KKTA…QKAA) and 48–213 (SAVK…APSC). Residues 14-31 (KTAKKPAKKTTKQNRQKQ) show a composition bias toward basic residues. Low complexity predominate over residues 49–72 (AVKQNNGAKGKAKANGVKGNAKAQ). 2 stretches are compositionally biased toward acidic residues: residues 88 to 106 (ESVD…EDNE) and 114 to 129 (EDDY…EFEE). Positions 133 to 155 (NSPSGSCSCSASSGSSNTENSPP) are enriched in low complexity. Residues 190-199 (EQKEGKELSK) are compositionally biased toward basic and acidic residues. Residues 204–213 (KSAPAAAPSC) show a composition bias toward low complexity. One can recognise a JmjC domain in the interval 379-518 (NPSTYLKGLR…NLMEALMPAV (140 aa)). Fe cation is bound by residues His419, Asp421, and His484.

Belongs to the ROX family. NO66 subfamily. Fe(2+) is required as a cofactor.

The protein localises to the nucleus. The catalysed reaction is N(6),N(6)-dimethyl-L-lysyl(36)-[histone H3] + 2 2-oxoglutarate + 2 O2 = L-lysyl(36)-[histone H3] + 2 formaldehyde + 2 succinate + 2 CO2. In terms of biological role, oxygenase that can act as both a histone lysine demethylase and a ribosomal histidine hydroxylase. Specifically demethylates 'Lys-4' (H3K4me) and 'Lys-36' (H3K36me) of histone H3, thereby playing a central role in histone code. The protein is Bifunctional lysine-specific demethylase and histidyl-hydroxylase NO66 of Drosophila grimshawi (Hawaiian fruit fly).